Here is a 243-residue protein sequence, read N- to C-terminus: MTTPTTLSGAILDPMLRADPVGPRITYYDDATGERIELSAVTLANWAAKTGNLLRDELAAGPASRVAILLPAHWQTAAVLFGVWWIGAQAILDDSPADVALCTADRLAEADAVVNSAAVAGEVAVLSLDPFGRPATGLPVGVTDYATAVRVHGDQIVPEHNPGPVLAGRSVEQILRDCAASAAARGLTAADRVLSTASWAGPDELVDGLLAILAAGASLVQVANPDPAMLQRRIATEKVTRVL.

It belongs to the TIGR03089 family.

The sequence is that of TIGR03089 family protein from Mycobacterium tuberculosis (strain ATCC 25618 / H37Rv).